Here is a 101-residue protein sequence, read N- to C-terminus: Protein S100-A3 (101 aa).

An N-acetylalanine modification is found at alanine 2. 2 EF-hand domains span residues 12-47 (IVCT…TWTP) and 50-85 (FREC…LCLY). Ca(2+) is bound by residues lysine 28 and glutamate 33. Cysteine 30 and cysteine 68 are oxidised to a cystine. Arginine 51 is modified (citrulline; by PAD3). 5 residues coordinate Ca(2+): aspartate 63, asparagine 65, aspartate 67, glutamate 69, and glutamate 74. Cysteine 81 and cysteine 99 form a disulfide bridge. Zn(2+) contacts are provided by cysteine 83, cysteine 86, histidine 87, and cysteine 93.

This sequence belongs to the S-100 family. As to quaternary structure, homodimer and homotetramer for the citrullinated form. Post-translationally, more than half of the arginine residues undergo citrullination by PAD1 and PAD2. Arg-51 is specifically citrullinated by PAD3 and promotes tetramerization. In terms of tissue distribution, skin specific, specifically expressed at the inner endocuticle of hair fibers.

Its subcellular location is the cytoplasm. Binds both calcium and zinc. May be involved in calcium-dependent cuticle cell differentiation, hair shaft and hair cuticular barrier formation. In Homo sapiens (Human), this protein is Protein S100-A3 (S100A3).